The sequence spans 339 residues: Phosphoribosylformylglycinamidine cyclo-ligase (339 aa).

The protein belongs to the AIR synthase family.

The protein resides in the cytoplasm. It catalyses the reaction 2-formamido-N(1)-(5-O-phospho-beta-D-ribosyl)acetamidine + ATP = 5-amino-1-(5-phospho-beta-D-ribosyl)imidazole + ADP + phosphate + H(+). It functions in the pathway purine metabolism; IMP biosynthesis via de novo pathway; 5-amino-1-(5-phospho-D-ribosyl)imidazole from N(2)-formyl-N(1)-(5-phospho-D-ribosyl)glycinamide: step 2/2. This is Phosphoribosylformylglycinamidine cyclo-ligase from Methanobrevibacter smithii (strain ATCC 35061 / DSM 861 / OCM 144 / PS).